Here is a 615-residue protein sequence, read N- to C-terminus: Nuclear cap-binding protein subunit 3 (615 aa).

A Glycyl lysine isopeptide (Lys-Gly) (interchain with G-Cter in SUMO2) cross-link involves residue lysine 12. A compositionally biased stretch (low complexity) spans 15–27 (APAGPALGLPSPE). Positions 15-43 (APAGPALGLPSPEVESGLERGEPEPMEVE) are disordered. Serine 25 is subject to Phosphoserine. Lysine 70 is covalently cross-linked (Glycyl lysine isopeptide (Lys-Gly) (interchain with G-Cter in SUMO2)). Serine 73 carries the post-translational modification Phosphoserine. An RNA recognition motif (RRM) domain region spans residues 126-187 (ETIYICGVDE…MSSLPAQDKM (62 aa)). Residues 155 to 158 (WLDD) carry the WLDD motif; essential for 7-methylguanosine-containing mRNA cap binding motif. 2 disordered regions span residues 182–233 (PAQD…LDTL) and 332–400 (HSGL…MDYD). Residues 185–208 (DKMRSRDASEDKSSEKNKKDKQED) show a composition bias toward basic and acidic residues. A Glycyl lysine isopeptide (Lys-Gly) (interchain with G-Cter in SUMO2) cross-link involves residue lysine 186. Phosphoserine occurs at positions 209 and 210. 2 stretches are compositionally biased toward acidic residues: residues 209–230 (SSDD…DVEL) and 341–360 (EPIE…DMDA). Residues 361-383 (DDRVVVEYHEELPGLKQPRERSL) are compositionally biased toward basic and acidic residues. Threonine 408 carries the phosphothreonine modification. Serine 410 carries the phosphoserine modification. 2 disordered regions span residues 430 to 454 (SIRN…NKLP) and 467 to 615 (EKRQ…EAES). Positions 506–516 (VRREPSSDVHS) are enriched in basic and acidic residues. A Glycyl lysine isopeptide (Lys-Gly) (interchain with G-Cter in SUMO2) cross-link involves residue lysine 536. Composition is skewed to basic and acidic residues over residues 549–564 (KTKE…RASG) and 580–593 (IKEK…KSRL). Serine 563 carries the post-translational modification Phosphoserine. Residues 606–615 (ESSSGSEAES) are compositionally biased toward low complexity. The residue at position 615 (serine 615) is a Phosphoserine.

The protein belongs to the NCBP3 family. As to quaternary structure, component of an alternative cap-binding complex (CBC) composed of NCBP1/CBP80 and NCBP3. Interacts with SRRT, KPNA3, THOC5 and EIF4A3.

It is found in the nucleus. It localises to the cytoplasm. Functionally, associates with NCBP1/CBP80 to form an alternative cap-binding complex (CBC) which plays a key role in mRNA export. NCBP3 serves as adapter protein linking the capped RNAs (m7GpppG-capped RNA) to NCBP1/CBP80. Unlike the conventional CBC with NCBP2 which binds both small nuclear RNA (snRNA) and messenger (mRNA) and is involved in their export from the nucleus, the alternative CBC with NCBP3 does not bind snRNA and associates only with mRNA thereby playing a role in only mRNA export. The alternative CBC is particularly important in cellular stress situations such as virus infections and the NCBP3 activity is critical to inhibit virus growth. The polypeptide is Nuclear cap-binding protein subunit 3 (Mus musculus (Mouse)).